Reading from the N-terminus, the 360-residue chain is Peptide chain release factor 1 (360 aa).

Residue Gln235 is modified to N5-methylglutamine.

This sequence belongs to the prokaryotic/mitochondrial release factor family. Methylated by PrmC. Methylation increases the termination efficiency of RF1.

It is found in the cytoplasm. Its function is as follows. Peptide chain release factor 1 directs the termination of translation in response to the peptide chain termination codons UAG and UAA. The protein is Peptide chain release factor 1 of Methylobacillus flagellatus (strain ATCC 51484 / DSM 6875 / VKM B-1610 / KT).